Reading from the N-terminus, the 142-residue chain is MLEEKKKQESFEIQRIYIKDVSFEAPNTPNIFHVNWIPTIKLNLNTTTKKIKENIFEVVLMVKVTVKIKEDLVFLCDIDQAGIFFIANINEKRLKHCLYSYCPNILFPYARTCISNLVSCGSFPQMNLAPINFDALYHDHIK.

The protein belongs to the SecB family. In terms of assembly, homotetramer, a dimer of dimers. One homotetramer interacts with 1 SecA dimer.

The protein localises to the cytoplasm. One of the proteins required for the normal export of preproteins out of the cell cytoplasm. It is a molecular chaperone that binds to a subset of precursor proteins, maintaining them in a translocation-competent state. It also specifically binds to its receptor SecA. The protein is Protein-export protein SecB of Buchnera aphidicola subsp. Acyrthosiphon pisum (strain 5A).